A 323-amino-acid polypeptide reads, in one-letter code: Sphingolipid delta(4)-desaturase DES1 (323 aa).

2 consecutive transmembrane segments (helical) span residues 41–61 (YNLIWVVMLMVAAQLTAFYLV) and 68–88 (WVVFWAYVFGSCISHSMTLAI). The Histidine box-1 motif lies at 89-93 (HEISH). A helical transmembrane segment spans residues 102–122 (AMWNRWFGIFANLPLGLPYSI). The short motif at 128 to 132 (HMDHH) is the Histidine box-2 element. 3 consecutive transmembrane segments (helical) span residues 159–179 (KFIWIVLQPFFYAIRPLCINP), 185–205 (LEIINLLAQLFFDIVIYYLWG), and 209–229 (IFYMLAGSVLGLGLHPISGHF). The Histidine box-3 signature appears at 259 to 263 (HNEHH).

The protein belongs to the fatty acid desaturase type 1 family. DEGS subfamily. As to quaternary structure, interacts with RLBP1; the interaction increases synthesis of chromophore-precursors by DEGS1. Expressed in retina and retinal pigment epithelium by Mueller cells (at protein level).

The protein localises to the endoplasmic reticulum membrane. The catalysed reaction is an N-acylsphinganine + 2 Fe(II)-[cytochrome b5] + O2 + 2 H(+) = an N-acylsphing-4-enine + 2 Fe(III)-[cytochrome b5] + 2 H2O. The enzyme catalyses all-trans-retinol = 11-cis-retinol. It catalyses the reaction all-trans-retinol = 9-cis-retinol. It carries out the reaction all-trans-retinol = 13-cis-retinol. The catalysed reaction is 11-cis-retinol = 13-cis-retinol. The enzyme catalyses 11-cis-retinol = 9-cis-retinol. Has sphingolipid-delta-4-desaturase activity. Converts D-erythro-sphinganine to D-erythro-sphingosine (E-sphing-4-enine). Catalyzes the equilibrium isomerization of retinols. The chain is Sphingolipid delta(4)-desaturase DES1 (DEGS1) from Gallus gallus (Chicken).